A 569-amino-acid chain; its full sequence is uncharacterized protein (569 aa).

The first 21 residues, 1-21 (MLCVMMLLFSAIASFPVSAQA), serve as a signal peptide directing secretion. Over 22–530 (KDQDAGILII…DHHRQTPLEK (509 aa)) the chain is Extracellular. The helical transmembrane segment at 531-551 (ALWILSAVVLLFVIMFVSYTF) threads the bilayer. Topologically, residues 552 to 569 (YLRATLKKRIFKERRSLG) are cytoplasmic.

The protein localises to the cell membrane. This is an uncharacterized protein from Bacillus subtilis (strain 168).